Reading from the N-terminus, the 219-residue chain is Protein RhiB (219 aa).

Positions 174 to 195 are enriched in polar residues; sequence AGISQQGNAAGTSISSKSTGSP. The disordered stretch occupies residues 174-201; it reads AGISQQGNAAGTSISSKSTGSPENPART.

Its function is as follows. May be involved in plant-microbe interaction. This Rhizobium leguminosarum bv. viciae protein is Protein RhiB (rhiB).